Here is a 328-residue protein sequence, read N- to C-terminus: DNA-directed RNA polymerase subunit alpha (328 aa).

The interval 1–234 is alpha N-terminal domain (alpha-NTD); it reads MQNSPTEYLK…GQLSVFADLE (234 aa). The segment at 248-328 is alpha C-terminal domain (alpha-CTD); the sequence is VDPILLRPVD…NWPPAGLEKV (81 aa).

Belongs to the RNA polymerase alpha chain family. Homodimer. The RNAP catalytic core consists of 2 alpha, 1 beta, 1 beta' and 1 omega subunit. When a sigma factor is associated with the core the holoenzyme is formed, which can initiate transcription.

It catalyses the reaction RNA(n) + a ribonucleoside 5'-triphosphate = RNA(n+1) + diphosphate. DNA-dependent RNA polymerase catalyzes the transcription of DNA into RNA using the four ribonucleoside triphosphates as substrates. In Methylobacillus flagellatus (strain ATCC 51484 / DSM 6875 / VKM B-1610 / KT), this protein is DNA-directed RNA polymerase subunit alpha.